Reading from the N-terminus, the 393-residue chain is NAD(P)H-quinone oxidoreductase subunit H, chloroplastic (393 aa).

This sequence belongs to the complex I 49 kDa subunit family. As to quaternary structure, NDH is composed of at least 16 different subunits, 5 of which are encoded in the nucleus.

The protein localises to the plastid. It is found in the chloroplast thylakoid membrane. It catalyses the reaction a plastoquinone + NADH + (n+1) H(+)(in) = a plastoquinol + NAD(+) + n H(+)(out). It carries out the reaction a plastoquinone + NADPH + (n+1) H(+)(in) = a plastoquinol + NADP(+) + n H(+)(out). Functionally, NDH shuttles electrons from NAD(P)H:plastoquinone, via FMN and iron-sulfur (Fe-S) centers, to quinones in the photosynthetic chain and possibly in a chloroplast respiratory chain. The immediate electron acceptor for the enzyme in this species is believed to be plastoquinone. Couples the redox reaction to proton translocation, and thus conserves the redox energy in a proton gradient. The sequence is that of NAD(P)H-quinone oxidoreductase subunit H, chloroplastic from Vitis vinifera (Grape).